The sequence spans 97 residues: Protein E7 (97 aa).

The tract at residues 1-44 is E7 terminal domain; that stretch reads MHGKKPSVQDIVLDLKPTTETDLTCYESLDNSEDEDETDSHLER. The short motif at 23–27 is the LXCXE motif; interaction with host RB1 and TMEM173/STING element; the sequence is LTCYE. A zinc finger lies at 57–93; that stretch reads CSRCQSTVCLTIESTHADLLVLEDLLMGALKIVCPNC. Positions 75 to 83 match the Nuclear export signal motif; that stretch reads LLVLEDLLM.

Belongs to the papillomaviridae E7 protein family. In terms of assembly, homodimer. Homooligomer. Interacts with host RB1; this interaction induces dissociation of RB1-E2F1 complex thereby disrupting RB1 activity. Interacts with host EP300; this interaction represses EP300 transcriptional activity. Interacts with protein E2; this interaction inhibits E7 oncogenic activity. Interacts with host TMEM173/STING; this interaction impairs the ability of TMEM173/STING to sense cytosolic DNA and promote the production of type I interferon (IFN-alpha and IFN-beta). Post-translationally, highly phosphorylated.

The protein resides in the host cytoplasm. Its subcellular location is the host nucleus. Its function is as follows. Plays a role in viral genome replication by driving entry of quiescent cells into the cell cycle. Stimulation of progression from G1 to S phase allows the virus to efficiently use the cellular DNA replicating machinery to achieve viral genome replication. E7 protein has both transforming and trans-activating activities. Induces the disassembly of the E2F1 transcription factor from RB1, with subsequent transcriptional activation of E2F1-regulated S-phase genes. Interferes with host histone deacetylation mediated by HDAC1 and HDAC2, leading to transcription activation. Also plays a role in the inhibition of both antiviral and antiproliferative functions of host interferon alpha. Interaction with host TMEM173/STING impairs the ability of TMEM173/STING to sense cytosolic DNA and promote the production of type I interferon (IFN-alpha and IFN-beta). In Human papillomavirus type 34, this protein is Protein E7.